Here is a 469-residue protein sequence, read N- to C-terminus: Glutamate--tRNA ligase (469 aa).

The 'HIGH' region signature appears at 9-19 (PSPTGFLHVGG). Residues cysteine 98, cysteine 100, cysteine 125, and aspartate 127 each coordinate Zn(2+). The 'KMSKS' region motif lies at 236–240 (KLSKR). Lysine 239 contacts ATP.

The protein belongs to the class-I aminoacyl-tRNA synthetase family. Glutamate--tRNA ligase type 1 subfamily. As to quaternary structure, monomer. Zn(2+) serves as cofactor.

Its subcellular location is the cytoplasm. The enzyme catalyses tRNA(Glu) + L-glutamate + ATP = L-glutamyl-tRNA(Glu) + AMP + diphosphate. Catalyzes the attachment of glutamate to tRNA(Glu) in a two-step reaction: glutamate is first activated by ATP to form Glu-AMP and then transferred to the acceptor end of tRNA(Glu). This is Glutamate--tRNA ligase from Shewanella loihica (strain ATCC BAA-1088 / PV-4).